Consider the following 213-residue polypeptide: Calcium-dependent cell adhesion molecule 1 (213 aa).

4 repeat units span residues M1–S48, N49–Q97, W98–P146, and D147–N194. Residues M1–N194 form a 4 X approximate tandem repeats region.

The protein belongs to the Dictyostelium CAD family. Post-translationally, the N-terminus is blocked.

It is found in the cell membrane. Mediates calcium-dependent cell-cell adhesion during the early stage of development. In Dictyostelium discoideum (Social amoeba), this protein is Calcium-dependent cell adhesion molecule 1 (cadA).